Consider the following 66-residue polypeptide: Large ribosomal subunit protein bL33c (66 aa).

The protein belongs to the bacterial ribosomal protein bL33 family.

Its subcellular location is the plastid. It is found in the chloroplast. The chain is Large ribosomal subunit protein bL33c (rpl33) from Arabidopsis thaliana (Mouse-ear cress).